A 71-amino-acid chain; its full sequence is MAKVCYSCGKGPSFGNARSHSLRATRRRWNPNLQKVRIREGGATKRVWVCASCLKGFKVQKAVRPVPAAEA.

It belongs to the bacterial ribosomal protein bL28 family.

In Rubrobacter xylanophilus (strain DSM 9941 / JCM 11954 / NBRC 16129 / PRD-1), this protein is Large ribosomal subunit protein bL28.